Reading from the N-terminus, the 274-residue chain is Ommochrome-binding protein (274 aa).

Positions 1-18 (MKLLILTICALHVNQMMA) are cleaved as a signal peptide. The N-linked (GlcNAc...) asparagine glycan is linked to Asn183.

In terms of assembly, monomer. In terms of tissue distribution, present in larval hemolymph and synthesized by the fat body.

Its function is as follows. Binds to an ommochrome, ommatin D which is a yellow chromophore. May be involved in guiding the chromophore through the hemolymph from the epidermis to the gut. The sequence is that of Ommochrome-binding protein from Manduca sexta (Tobacco hawkmoth).